Here is a 118-residue protein sequence, read N- to C-terminus: MPITTPKQKTTQRIKMRIHKGDTVQVITGKDKGKTGEVLRTLPIENRVIVQGVNIRTRHVKPTQEGESGRIVTEEASVHASNVMLYSNNKKIASRVALVVEKDGSKKRRLKKTGELID.

Belongs to the universal ribosomal protein uL24 family. Part of the 50S ribosomal subunit.

Functionally, one of two assembly initiator proteins, it binds directly to the 5'-end of the 23S rRNA, where it nucleates assembly of the 50S subunit. In terms of biological role, one of the proteins that surrounds the polypeptide exit tunnel on the outside of the subunit. The protein is Large ribosomal subunit protein uL24 of Prochlorococcus marinus (strain MIT 9303).